A 130-amino-acid chain; its full sequence is Large ribosomal subunit protein uL22 (130 aa).

The protein belongs to the universal ribosomal protein uL22 family. Part of the 50S ribosomal subunit.

Its function is as follows. This protein binds specifically to 23S rRNA; its binding is stimulated by other ribosomal proteins, e.g. L4, L17, and L20. It is important during the early stages of 50S assembly. It makes multiple contacts with different domains of the 23S rRNA in the assembled 50S subunit and ribosome. Functionally, the globular domain of the protein is located near the polypeptide exit tunnel on the outside of the subunit, while an extended beta-hairpin is found that lines the wall of the exit tunnel in the center of the 70S ribosome. This chain is Large ribosomal subunit protein uL22, found in Clavibacter michiganensis subsp. michiganensis (strain NCPPB 382).